The chain runs to 323 residues: Serpentine receptor class gamma-5 (323 aa).

7 helical membrane passes run 31–51 (QLFYMVPGIIIHFRILSIMLF), 63–83 (FIIFSMDSIASLTQLILDLFI), 98–117 (YPLFEHYVLFPNIIFSIYNY), 151–171 (IPVTIAFITLSPFLVIWNVII), 193–213 (WASLSMFQMIFMAISLTITVF), 245–265 (AAFFSAALFQSYFAFFSITAA), and 272–292 (FLQGFAFDVLNVGSPIVMVLI).

It belongs to the nematode receptor-like protein srg family.

The protein resides in the membrane. This is Serpentine receptor class gamma-5 (srg-5) from Caenorhabditis elegans.